A 246-amino-acid chain; its full sequence is Protein phosphatase PhpP (246 aa).

A PPM-type phosphatase domain is found at 2–240; it reads EISLLTDVGQ…DNITVALVSM (239 aa). 4 residues coordinate Mn(2+): Asp36, Gly37, Asp192, and Asp231.

Belongs to the PP2C family. Mn(2+) is required as a cofactor.

It is found in the cytoplasm. It catalyses the reaction O-phospho-L-seryl-[protein] + H2O = L-seryl-[protein] + phosphate. The enzyme catalyses O-phospho-L-threonyl-[protein] + H2O = L-threonyl-[protein] + phosphate. In terms of biological role, protein phosphatase able to dephosphorylate StkP-P and other phosphorylated protein substrates. PhpP and its cognate protein kinase StkP appear to constitute a functional signaling couple in vivo, PhpP's primary role being probably to control phosphorylation levels of StkP and of its targets. PhpP thus performs an essential control of StkP activity. Also dephosphorylates DivIVA in vivo. The polypeptide is Protein phosphatase PhpP (phpP) (Streptococcus pneumoniae serotype 2 (strain D39 / NCTC 7466)).